The following is a 921-amino-acid chain: Probable glucan 1,3-alpha-glucosidase (921 aa).

The N-terminal stretch at M1–S20 is a signal peptide. Catalysis depends on D512, which acts as the Nucleophile. The active site involves E515. D588 functions as the Proton donor in the catalytic mechanism. N-linked (GlcNAc...) asparagine glycosylation is found at N689 and N804.

The protein belongs to the glycosyl hydrolase 31 family. In terms of assembly, heterodimer of a catalytic alpha subunit (PSL5) and a beta subunit (PSL4). As to expression, expressed in roots, rosette leaves, leaf blades, mature stems, cauline leaves, flower buds, flowers and siliques.

It localises to the endoplasmic reticulum. The enzyme catalyses Hydrolysis of terminal (1-&gt;3)-alpha-D-glucosidic links in (1-&gt;3)-alpha-D-glucans.. It functions in the pathway glycan metabolism; N-glycan metabolism. In terms of biological role, cleaves sequentially the 2 innermost alpha-1,3-linked glucose residues from the Glc(2)Man(9)GlcNAc(2) oligosaccharide precursor of immature glycoproteins. Essential for stable accumulation of the receptor EFR that determines the specific perception of bacterial elongation factor Tu (EF-Tu), a potent elicitor of the defense response to pathogen-associated molecular patterns (PAMPs). Required for sustained activation of EFR-mediated signaling, but not receptor FLS2-mediated signaling elicited by the bacterial flagellin flg22. The sequence is that of Probable glucan 1,3-alpha-glucosidase (PSL5) from Arabidopsis thaliana (Mouse-ear cress).